The sequence spans 316 residues: 4-hydroxy-3-methylbut-2-enyl diphosphate reductase (316 aa).

Cys17 lines the [4Fe-4S] cluster pocket. 2 residues coordinate (2E)-4-hydroxy-3-methylbut-2-enyl diphosphate: His46 and His79. Residues His46 and His79 each contribute to the dimethylallyl diphosphate site. His46 and His79 together coordinate isopentenyl diphosphate. Cys101 lines the [4Fe-4S] cluster pocket. His129 lines the (2E)-4-hydroxy-3-methylbut-2-enyl diphosphate pocket. His129 lines the dimethylallyl diphosphate pocket. His129 is a binding site for isopentenyl diphosphate. Catalysis depends on Glu131, which acts as the Proton donor. Thr170 serves as a coordination point for (2E)-4-hydroxy-3-methylbut-2-enyl diphosphate. Residue Cys200 coordinates [4Fe-4S] cluster. Residues Ser228, Ser229, Asn230, and Ser273 each contribute to the (2E)-4-hydroxy-3-methylbut-2-enyl diphosphate site. Positions 228, 229, 230, and 273 each coordinate dimethylallyl diphosphate. Residues Ser228, Ser229, Asn230, and Ser273 each contribute to the isopentenyl diphosphate site.

Belongs to the IspH family. [4Fe-4S] cluster is required as a cofactor.

It carries out the reaction isopentenyl diphosphate + 2 oxidized [2Fe-2S]-[ferredoxin] + H2O = (2E)-4-hydroxy-3-methylbut-2-enyl diphosphate + 2 reduced [2Fe-2S]-[ferredoxin] + 2 H(+). The catalysed reaction is dimethylallyl diphosphate + 2 oxidized [2Fe-2S]-[ferredoxin] + H2O = (2E)-4-hydroxy-3-methylbut-2-enyl diphosphate + 2 reduced [2Fe-2S]-[ferredoxin] + 2 H(+). It participates in isoprenoid biosynthesis; dimethylallyl diphosphate biosynthesis; dimethylallyl diphosphate from (2E)-4-hydroxy-3-methylbutenyl diphosphate: step 1/1. It functions in the pathway isoprenoid biosynthesis; isopentenyl diphosphate biosynthesis via DXP pathway; isopentenyl diphosphate from 1-deoxy-D-xylulose 5-phosphate: step 6/6. In terms of biological role, catalyzes the conversion of 1-hydroxy-2-methyl-2-(E)-butenyl 4-diphosphate (HMBPP) into a mixture of isopentenyl diphosphate (IPP) and dimethylallyl diphosphate (DMAPP). Acts in the terminal step of the DOXP/MEP pathway for isoprenoid precursor biosynthesis. The sequence is that of 4-hydroxy-3-methylbut-2-enyl diphosphate reductase from Roseobacter denitrificans (strain ATCC 33942 / OCh 114) (Erythrobacter sp. (strain OCh 114)).